Consider the following 554-residue polypeptide: Condensin-2 complex subunit H2 (554 aa).

A phosphoserine mark is found at Ser45, Ser178, Ser182, Ser199, and Ser200. The tract at residues 154–296 is disordered; that stretch reads PVDVHPMPRS…GQKRKRKGAT (143 aa). A compositionally biased stretch (polar residues) spans 179–191; it reads RNGSPVSVRSISQ. The span at 201 to 210 shows a compositional bias: acidic residues; it reads GDEDAEDVAE. Position 441 is a phosphoserine (Ser441).

The protein belongs to the CND2 H2 (condensin-2 subunit 2) family. In terms of assembly, component of the condensin-2 complex, which contains the SMC2 and SMC4 heterodimer, and three non SMC subunits, NCAPG2, NCAPH2 and NCAPD3 that probably regulate the complex.

Its subcellular location is the nucleus. Regulatory subunit of the condensin-2 complex, a complex that seems to provide chromosomes with an additional level of organization and rigidity and in establishing mitotic chromosome architecture. May promote the resolution of double-strand DNA catenanes (intertwines) between sister chromatids. Condensin-mediated compaction likely increases tension in catenated sister chromatids, providing directionality for type II topoisomerase-mediated strand exchanges toward chromatid decatenation. Required for decatenation of chromatin bridges at anaphase. Early in neurogenesis, may play an essential role to ensure accurate mitotic chromosome condensation in neuron stem cells, ultimately affecting neuron pool and cortex size. Seems to have lineage-specific role in T-cell development. The sequence is that of Condensin-2 complex subunit H2 (Ncaph2) from Rattus norvegicus (Rat).